A 941-amino-acid polypeptide reads, in one-letter code: Pre-mRNA-processing factor 6 (941 aa).

The disordered stretch occupies residues 1–79; that stretch reads MNKKKKPFLG…DEDLNDTNYD (79 aa). Positions 39–65 are enriched in basic and acidic residues; the sequence is DANDPVDDRHAPPGKRTVGDQMKKNQA. Positions 66-78 are enriched in acidic residues; it reads ADDDDEDLNDTNY. The residue at position 143 (Ser143) is a Phosphoserine. Thr180, Thr266, and Thr275 each carry phosphothreonine. Ser279 carries the post-translational modification Phosphoserine. 9 HAT repeats span residues 384 to 416, 418 to 444, 445 to 476, 554 to 586, 588 to 620, 622 to 654, 689 to 721, 723 to 755, and 855 to 887; these read TDIRAKKRVLRKALEHVPNSVRLWKAAVELEEP, DARIMLSRAVECCPTSVELWLALARLE, TYENARKVLNKARENIPTDRHIWITAAKLEEA, NALECARAIYAYALQVFPSKKSVWLRAAYFGKN, GTRESLEALLQRAVAHCPKAEVLWLMGAKSKWL, GDVPAARSILALAFQANPNSEEIWLAAVKLESE, DNIRAAQDLCEEALRHYEDFPKLWMMKGQIEEQ, EMMEKAREAYNQGLKKCPHSTPLWLLLSRLEEK, and RKITKAREWFHRTVKIDSDLGDAWAFFYKFELQ.

Identified in the spliceosome B complex. Identified in the spliceosome C complex. Associates with the U5 snRNP particle. Component of the U4/U6-U5 tri-snRNP complex composed of the U4, U6 and U5 snRNAs and at least PRPF3, PRPF4, PRPF6, PRPF8, PRPF31, SNRNP200, TXNL4A, SNRNP40, DDX23, CD2BP2, PPIH, SNU13, EFTUD2, SART1 and USP39, LSm proteins LSm2-8 and Sm proteins. Interacts with ARAF1. Interacts with AR and NR3C1, but not ESR1, independently of the presence of hormones. Interacts with USH1G. Post-translationally, phosphorylated by PRP4K during spliceosome assembly.

The protein resides in the nucleus. The protein localises to the nucleoplasm. It localises to the nucleus speckle. In terms of biological role, involved in pre-mRNA splicing as component of the U4/U6-U5 tri-snRNP complex, one of the building blocks of the spliceosome. Enhances dihydrotestosterone-induced transactivation activity of AR, as well as dexamethasone-induced transactivation activity of NR3C1, but does not affect estrogen-induced transactivation. The chain is Pre-mRNA-processing factor 6 (PRPF6) from Pongo abelii (Sumatran orangutan).